The chain runs to 533 residues: Na(+)/H(+) antiporter NhaB (533 aa).

Helical transmembrane passes span 10–30 (IGNFLGNSPKWYKIAILSFLI), 67–87 (PGGLLAIEAVAIGMTSASQVL), 96–116 (VLLLLVFMVAGIYFMKQLLLF), 131–165 (VSLLFCLASAFLSAFLDALTVIAVIITVAVGFYSI), 209–229 (LLMHAGVGTALGGVCTMVGEP), 247–267 (IRMSPVTVPVFIAGILTCYIV), 310–330 (AFIGVWLIAGLALHLASVGLI), 355–375 (EEALPFTALLAVFFSVVAVII), 396–416 (LVIFYIANGLLSMVSDNVFVG), 454–474 (ATPNGQAAFLFLLTSALAPLI), and 485–505 (ALPYTIVLSIVGVMAIQIGFL).

The protein belongs to the NhaB Na(+)/H(+) (TC 2.A.34) antiporter family.

It localises to the cell inner membrane. The catalysed reaction is 2 Na(+)(in) + 3 H(+)(out) = 2 Na(+)(out) + 3 H(+)(in). Functionally, na(+)/H(+) antiporter that extrudes sodium in exchange for external protons. This Shewanella oneidensis (strain ATCC 700550 / JCM 31522 / CIP 106686 / LMG 19005 / NCIMB 14063 / MR-1) protein is Na(+)/H(+) antiporter NhaB.